Here is a 232-residue protein sequence, read N- to C-terminus: Lipopolysaccharide core heptose(II) kinase WaaY (232 aa).

It belongs to the protein kinase superfamily. RfaY/WaaY family.

It carries out the reaction alpha-D-Glc-(1-&gt;3)-[L-alpha-D-Hep-(1-&gt;7)]-L-alpha-D-Hep-(1-&gt;3)-4-O-PO3(2-)-L-alpha-D-Hep-(1-&gt;5)-[alpha-Kdo-(2-&gt;4)]-alpha-Kdo-(2-&gt;6)-lipid A + ATP = alpha-D-Glc-(1-&gt;3)-[L-alpha-D-Hep-(1-&gt;7)]-4-O-PO3(2-)-L-alpha-D-Hep-(1-&gt;3)-4-O-PO3(2-)-L-alpha-D-Hep-(1-&gt;5)-[alpha-Kdo-(2-&gt;4)]-alpha-Kdo-(2-&gt;6)-lipid A + ADP + H(+). It functions in the pathway bacterial outer membrane biogenesis; LPS core biosynthesis. Its function is as follows. Kinase involved in the biosynthesis of the core oligosaccharide region of lipopolysaccharide (LPS). Catalyzes the phosphorylation of the second heptose unit (HepII) of the inner core. In Escherichia coli (strain K12), this protein is Lipopolysaccharide core heptose(II) kinase WaaY.